Consider the following 150-residue polypeptide: Large ribosomal subunit protein uL13 (150 aa).

The tract at residues 129–150 is disordered; the sequence is AEHPHAAQQPKPLQLDPAATAQ.

The protein belongs to the universal ribosomal protein uL13 family. Part of the 50S ribosomal subunit.

Its function is as follows. This protein is one of the early assembly proteins of the 50S ribosomal subunit, although it is not seen to bind rRNA by itself. It is important during the early stages of 50S assembly. In Synechococcus sp. (strain WH7803), this protein is Large ribosomal subunit protein uL13.